Here is a 442-residue protein sequence, read N- to C-terminus: tRNA modification GTPase MnmE (442 aa).

R22, E79, and K119 together coordinate (6S)-5-formyl-5,6,7,8-tetrahydrofolate. The 151-residue stretch at 216–366 folds into the TrmE-type G domain; the sequence is GIKTCLVGAP…LLEKIKSIFA (151 aa). N226 provides a ligand contact to K(+). GTP is bound by residues 226–231, 245–251, and 270–273; these read NSGKSS, SEIPGTT, and DTAG. Mg(2+) is bound at residue S230. K(+) contacts are provided by S245, I247, and T250. T251 is a binding site for Mg(2+). Residue K442 coordinates (6S)-5-formyl-5,6,7,8-tetrahydrofolate.

Belongs to the TRAFAC class TrmE-Era-EngA-EngB-Septin-like GTPase superfamily. TrmE GTPase family. Homodimer. Heterotetramer of two MnmE and two MnmG subunits. K(+) is required as a cofactor.

Its subcellular location is the cytoplasm. Exhibits a very high intrinsic GTPase hydrolysis rate. Involved in the addition of a carboxymethylaminomethyl (cmnm) group at the wobble position (U34) of certain tRNAs, forming tRNA-cmnm(5)s(2)U34. The sequence is that of tRNA modification GTPase MnmE from Mesomycoplasma hyopneumoniae (strain 7448) (Mycoplasma hyopneumoniae).